The sequence spans 293 residues: Small ribosomal subunit biogenesis GTPase RsgA (293 aa).

The CP-type G domain occupies 63–223 (KNELVRPPIA…VADTPGFSSL (161 aa)). Residues 112 to 115 (SKMD) and 166 to 174 (GQSGVGKSS) each bind GTP. Zn(2+) contacts are provided by Cys247, Cys252, His254, and Cys260.

The protein belongs to the TRAFAC class YlqF/YawG GTPase family. RsgA subfamily. In terms of assembly, monomer. Associates with 30S ribosomal subunit, binds 16S rRNA. Zn(2+) is required as a cofactor.

Its subcellular location is the cytoplasm. Its function is as follows. One of several proteins that assist in the late maturation steps of the functional core of the 30S ribosomal subunit. Helps release RbfA from mature subunits. May play a role in the assembly of ribosomal proteins into the subunit. Circularly permuted GTPase that catalyzes slow GTP hydrolysis, GTPase activity is stimulated by the 30S ribosomal subunit. This chain is Small ribosomal subunit biogenesis GTPase RsgA, found in Bacillus cytotoxicus (strain DSM 22905 / CIP 110041 / 391-98 / NVH 391-98).